We begin with the raw amino-acid sequence, 99 residues long: Aspartyl/glutamyl-tRNA(Asn/Gln) amidotransferase subunit C (99 aa).

It belongs to the GatC family. In terms of assembly, heterotrimer of A, B and C subunits.

The enzyme catalyses L-glutamyl-tRNA(Gln) + L-glutamine + ATP + H2O = L-glutaminyl-tRNA(Gln) + L-glutamate + ADP + phosphate + H(+). It catalyses the reaction L-aspartyl-tRNA(Asn) + L-glutamine + ATP + H2O = L-asparaginyl-tRNA(Asn) + L-glutamate + ADP + phosphate + 2 H(+). Its function is as follows. Allows the formation of correctly charged Asn-tRNA(Asn) or Gln-tRNA(Gln) through the transamidation of misacylated Asp-tRNA(Asn) or Glu-tRNA(Gln) in organisms which lack either or both of asparaginyl-tRNA or glutaminyl-tRNA synthetases. The reaction takes place in the presence of glutamine and ATP through an activated phospho-Asp-tRNA(Asn) or phospho-Glu-tRNA(Gln). In Corynebacterium efficiens (strain DSM 44549 / YS-314 / AJ 12310 / JCM 11189 / NBRC 100395), this protein is Aspartyl/glutamyl-tRNA(Asn/Gln) amidotransferase subunit C.